A 62-amino-acid chain; its full sequence is Photosystem II reaction center protein Z (62 aa).

A run of 2 helical transmembrane segments spans residues 8-28 (AVFA…VVLA) and 41-61 (FSGA…NSFV).

The protein belongs to the PsbZ family. PSII is composed of 1 copy each of membrane proteins PsbA, PsbB, PsbC, PsbD, PsbE, PsbF, PsbH, PsbI, PsbJ, PsbK, PsbL, PsbM, PsbT, PsbY, PsbZ, Psb30/Ycf12, at least 3 peripheral proteins of the oxygen-evolving complex and a large number of cofactors. It forms dimeric complexes.

The protein localises to the plastid. The protein resides in the chloroplast thylakoid membrane. Functionally, may control the interaction of photosystem II (PSII) cores with the light-harvesting antenna, regulates electron flow through the 2 photosystem reaction centers. PSII is a light-driven water plastoquinone oxidoreductase, using light energy to abstract electrons from H(2)O, generating a proton gradient subsequently used for ATP formation. The chain is Photosystem II reaction center protein Z from Zygnema circumcarinatum (Green alga).